The chain runs to 348 residues: Lysophosphatidic acid receptor 2 (348 aa).

Topologically, residues 1–30 (MGQCYYNETIGFFYNNSGKELSLHWRPKDV) are extracellular. Residues asparagine 7 and asparagine 15 are each glycosylated (N-linked (GlcNAc...) asparagine). The chain crosses the membrane as a helical span at residues 31–51 (VVVALGLTVSVLVLLTNLLVI). Residues 52 to 66 (AAIASNRRFHQPIYY) lie on the Cytoplasmic side of the membrane. Residues 67-87 (LLGNLAAADLFAGMAYLFLMF) form a helical membrane-spanning segment. Residues 88–104 (HTGPRTARLSIKGWFLR) are Extracellular-facing. Residues 105 to 124 (QGLLDTSLTASVATLLAIAV) traverse the membrane as a helical segment. The Cytoplasmic portion of the chain corresponds to 125–144 (ERHRSVMAVQLHSRLPRGRV). Residues 145 to 165 (VTLIVGVWAAALGLGLLPAHF) form a helical membrane-spanning segment. Over 166–185 (WHCLCDLDSCSRMVPLFSRS) the chain is Extracellular. The chain crosses the membrane as a helical span at residues 186 to 206 (YLAAWALSSLLVFLLMVAVYT). At 207–239 (RIFFYVRRRVERMAEHVSCHPRYRETTLSLVKT) the chain is on the cytoplasmic side. A helical transmembrane segment spans residues 240–260 (VVIILGAFVVCWTPGQVVLLL). Topologically, residues 261–270 (DGLDCKSCNV) are extracellular. A helical transmembrane segment spans residues 271–291 (LAVEKYFLLLAEANSLVNAVV). At 292–348 (YSCRDAEMRRTFRRLLCCMCLRWSSHKSARYSASAQTGASTRIMLPENGRPLMDSTL) the chain is on the cytoplasmic side. Cysteine 308 is lipidated: S-palmitoyl cysteine. The PDZ-binding motif lies at 345–348 (DSTL).

The protein belongs to the G-protein coupled receptor 1 family. Interacts with SLC9A3R2/NHERF2, MAGI3 and PLCB3. Interacts with RALA and GRK2. Most abundantly expressed in testes, kidney, and embryonic brain. Other organs also express the transcript, including heart, lung, spleen, thymus, stomach, and adult brain. Several have little or no expression, including liver, small intestine, and skeletal muscle.

It localises to the cell surface. It is found in the cell membrane. Its function is as follows. Receptor for lysophosphatidic acid (LPA), a mediator of diverse cellular activities. Seems to be coupled to the G(i)/G(o), G(12)/G(13), and G(q) families of heteromeric G proteins. Plays a key role in phospholipase C-beta (PLC-beta) signaling pathway Stimulates phospholipase C (PLC) activity in a manner that is independent of RALA activation. This chain is Lysophosphatidic acid receptor 2, found in Mus musculus (Mouse).